The chain runs to 284 residues: 2,3,4,5-tetrahydropyridine-2,6-dicarboxylate N-succinyltransferase (284 aa).

The substrate site is built by R111 and D148.

The protein belongs to the transferase hexapeptide repeat family. As to quaternary structure, homotrimer.

The protein localises to the cytoplasm. The enzyme catalyses (S)-2,3,4,5-tetrahydrodipicolinate + succinyl-CoA + H2O = (S)-2-succinylamino-6-oxoheptanedioate + CoA. It participates in amino-acid biosynthesis; L-lysine biosynthesis via DAP pathway; LL-2,6-diaminopimelate from (S)-tetrahydrodipicolinate (succinylase route): step 1/3. This is 2,3,4,5-tetrahydropyridine-2,6-dicarboxylate N-succinyltransferase from Mesorhizobium japonicum (strain LMG 29417 / CECT 9101 / MAFF 303099) (Mesorhizobium loti (strain MAFF 303099)).